Reading from the N-terminus, the 396-residue chain is Enoyl-[acyl-carrier-protein] reductase [NADH] (396 aa).

NAD(+)-binding positions include 48–53 (GASTGY), 74–75 (FE), 111–112 (DA), and 139–140 (LA). Residue Tyr-225 coordinates substrate. Residue Tyr-235 is the Proton donor of the active site. Residues Lys-244 and 273-275 (VVT) contribute to the NAD(+) site.

This sequence belongs to the TER reductase family. In terms of assembly, monomer.

The enzyme catalyses a 2,3-saturated acyl-[ACP] + NAD(+) = a (2E)-enoyl-[ACP] + NADH + H(+). Its pathway is lipid metabolism; fatty acid biosynthesis. Its function is as follows. Involved in the final reduction of the elongation cycle of fatty acid synthesis (FAS II). Catalyzes the reduction of a carbon-carbon double bond in an enoyl moiety that is covalently linked to an acyl carrier protein (ACP). In Colwellia psychrerythraea (strain 34H / ATCC BAA-681) (Vibrio psychroerythus), this protein is Enoyl-[acyl-carrier-protein] reductase [NADH].